Consider the following 708-residue polypeptide: Caprin-1 (708 aa).

Low complexity-rich tracts occupy residues methionine 1 to serine 15 and glycine 22 to serine 37. The interval methionine 1–glutamine 48 is disordered. Proline 2 carries the post-translational modification N-acetylproline. A Phosphoserine modification is found at serine 10. The stretch at valine 58 to aspartate 92 forms a coiled coil. Serine 113 carries the phosphoserine modification. The stretch at lysine 123–glutamine 151 forms a coiled coil. At arginine 163 the chain carries Omega-N-methylarginine. The tract at residues glutamate 258–valine 287 is disordered. Over residues glutamine 269 to valine 287 the composition is skewed to acidic residues. Residues serine 333 and serine 341 each carry the phosphoserine modification. Positions glutamine 358 to glutamate 379 are G3BP1-binding. Polar residues predominate over residues leucine 415–alanine 452. 4 disordered regions span residues leucine 415–lysine 459, threonine 473–lysine 497, asparagine 521–leucine 559, and tyrosine 571–asparagine 708. Low complexity-rich tracts occupy residues glutamine 475 to glutamine 489 and glutamine 535 to leucine 559. Residues histidine 572–tyrosine 603 show a composition bias toward polar residues. The residue at position 623 (tyrosine 623) is a Phosphotyrosine. Residues arginine 624 and arginine 631 each carry the omega-N-methylarginine modification. Residues tyrosine 634 and tyrosine 637 each carry the phosphotyrosine modification. Residue arginine 638 is modified to Omega-N-methylarginine. Residues serine 640–serine 656 show a composition bias toward polar residues. O-linked (GlcNAc) serine glycosylation is found at serine 642 and serine 648. A phosphotyrosine mark is found at tyrosine 650, tyrosine 661, tyrosine 664, and tyrosine 669. Low complexity-rich tracts occupy residues arginine 675 to alanine 685 and asparagine 696 to asparagine 708. Arginine 697 carries the post-translational modification Asymmetric dimethylarginine; alternate. Arginine 697 bears the Omega-N-methylarginine; alternate mark.

This sequence belongs to the caprin family. As to quaternary structure, may form homomultimers. Interacts with G3BP1; interaction is direct and promotes stress granule formation. Interacts with G3BP2; interaction is direct and promotes stress granule formation. Interacts with PQBP1. Interacts with DDX3X. Interacts (when phosphorylated by EPHA4) with FMR1; interaction with FMR1 promotes formation of a membraneless compartment. In terms of processing, tyrosine phosphorylation by EPHA4 promotes interaction with FMR1 and liquid-liquid phase separation (LLPS) for the formation of a membraneless compartment that concentrates mRNAs with associated regulatory factors. O-glycosylated (O-GlcNAcylated), in a cell cycle-dependent manner. O-glycosylation by OGT inhibit ability to undergo liquid-liquid phase separation (LLPS).

The protein resides in the cytoplasm. The protein localises to the cytoplasmic ribonucleoprotein granule. Its subcellular location is the cytosol. It is found in the cell projection. It localises to the dendrite. The protein resides in the lamellipodium. With respect to regulation, ability to mediate liquid-liquid phase separation is regulated by ATP: moderate concentrations of ATP enhance phase separation, whereas high concentrations of ATP lead to inhibition of phase separation. Its function is as follows. mRNA-binding protein that acts as a regulator of mRNAs transport, translation and/or stability, and which is involved in neurogenesis, synaptic plasticity in neurons and cell proliferation and migration in multiple cell types. Plays an essential role in cytoplasmic stress granule formation. Acts as an mRNA regulator by mediating formation of some phase-separated membraneless compartment: undergoes liquid-liquid phase separation upon binding to target mRNAs, leading to assemble mRNAs into cytoplasmic ribonucleoprotein granules that concentrate mRNAs with associated regulatory factors. Undergoes liquid-liquid phase separation following phosphorylation and interaction with FMR1, promoting formation of cytoplasmic ribonucleoprotein granules that concentrate mRNAs with factors that inhibit translation and mediate deadenylation of target mRNAs. In these cytoplasmic ribonucleoprotein granules, CAPRIN1 mediates recruitment of CNOT7 deadenylase, leading to mRNA deadenylation and degradation. Binds directly and selectively to MYC and CCND2 mRNAs. In neuronal cells, directly binds to several mRNAs associated with RNA granules, including BDNF, CAMK2A, CREB1, MAP2, NTRK2 mRNAs, as well as to GRIN1 and KPNB1 mRNAs, but not to rRNAs. This is Caprin-1 (CAPRIN1) from Bos taurus (Bovine).